Consider the following 512-residue polypeptide: MSLADLIRQIPVLEAAGGSTTSLPVSMISSDSRDVLPGALFIAVRGYSADGHRFIKSAVERGAAAVLCEEIPPVLPDASLPYLRVEDARQALALAARQFYGFASDALHVIGVTGTNGKTTTARLITAMLNACGIRTGYIGTNLCTFGEQQIPLDRTTPEAHILHALFRRMLDSGCSVAVMEVSSHALVLQRVYGITFHAAVFTNLSMEHLDFHKTMQEYAGAKRQLFEQLSPQGFAVINSDDPRAEEMVSKINPEKRFCCTLDQTGRVAGDASRRFSAELIDQSIASATIRLCFPDAQQTISTVLPGQYNVMNLLQAAAVGCGMGLGSPVVAAALDALPGVAGRMERIMDRRRKEFVFVDYAHTPDALFKALSTLNALKSPASRLIVVFGCGGNRDRLKRPEMGRIAVENADLVILTSDNPRDEDPEMIIDEIEKGIRVKNHKRITDRAQAIRTAVALLQPGDVLLVAGKGHEQYQETAGEKSFFSDQETLRNALAEENAGEPEKGAVCKGC.

Ser-32 contacts UDP-N-acetyl-alpha-D-muramoyl-L-alanyl-D-glutamate. 114-120 lines the ATP pocket; that stretch reads GTNGKTT. UDP-N-acetyl-alpha-D-muramoyl-L-alanyl-D-glutamate-binding positions include 156–157, Ser-183, and Arg-191; that span reads TT. The residue at position 223 (Lys-223) is an N6-carboxylysine. Residues Arg-395, 419–422, Gly-469, and Glu-473 each bind meso-2,6-diaminopimelate; that span reads DNPR. A Meso-diaminopimelate recognition motif motif is present at residues 419-422; it reads DNPR.

Belongs to the MurCDEF family. MurE subfamily. It depends on Mg(2+) as a cofactor. Post-translationally, carboxylation is probably crucial for Mg(2+) binding and, consequently, for the gamma-phosphate positioning of ATP.

The protein resides in the cytoplasm. It catalyses the reaction UDP-N-acetyl-alpha-D-muramoyl-L-alanyl-D-glutamate + meso-2,6-diaminopimelate + ATP = UDP-N-acetyl-alpha-D-muramoyl-L-alanyl-gamma-D-glutamyl-meso-2,6-diaminopimelate + ADP + phosphate + H(+). The protein operates within cell wall biogenesis; peptidoglycan biosynthesis. Catalyzes the addition of meso-diaminopimelic acid to the nucleotide precursor UDP-N-acetylmuramoyl-L-alanyl-D-glutamate (UMAG) in the biosynthesis of bacterial cell-wall peptidoglycan. The chain is UDP-N-acetylmuramoyl-L-alanyl-D-glutamate--2,6-diaminopimelate ligase from Chlorobium phaeobacteroides (strain DSM 266 / SMG 266 / 2430).